Reading from the N-terminus, the 191-residue chain is Cell division protein SepF (191 aa).

Positions 21–96 are disordered; sequence EVEEPAVASV…NQQPAQEKTT (76 aa). The span at 25 to 56 shows a compositional bias: low complexity; sequence PAVASVKRQQDAAQPASQQQKAQSHQYHQSAS. Composition is skewed to polar residues over residues 57 to 69 and 86 to 95; these read RPSQ…GQNR and HNQQPAQEKT.

This sequence belongs to the SepF family. In terms of assembly, homodimer. Interacts with FtsZ.

Its subcellular location is the cytoplasm. Cell division protein that is part of the divisome complex and is recruited early to the Z-ring. Probably stimulates Z-ring formation, perhaps through the cross-linking of FtsZ protofilaments. Its function overlaps with FtsA. The sequence is that of Cell division protein SepF from Streptococcus mutans serotype c (strain ATCC 700610 / UA159).